The chain runs to 240 residues: Glycerol uptake facilitator protein 3 (240 aa).

The next 2 membrane-spanning stretches (helical) occupy residues 11 to 31 (LGEFLGTFILILLGDGVVAGV) and 41 to 61 (AGWVAITLGWGFAVTMGVYAS). Positions 70–72 (NPA) match the NPA 1 motif. 3 consecutive transmembrane segments (helical) span residues 88 to 108 (VIPYSAAQIAGGVIGGLVVWL), 137 to 157 (FWNFISEVIGTFVLVFGLLAF), and 162 to 182 (FTAGLNPIVVGILIIAIGLSL). Positions 191 to 193 (NPA) match the NPA 2 motif. Residues 219–239 (WVPIAGPLVGGALGALLFNVL) traverse the membrane as a helical segment.

It belongs to the MIP/aquaporin (TC 1.A.8) family.

It is found in the cell membrane. In terms of biological role, transporter that facilitates the transmembrane diffusion of water, dihydroxyacetone, glycerol and H(2)O(2). Is not permeable to urea and D/L-lactic acid. This chain is Glycerol uptake facilitator protein 3, found in Lactiplantibacillus plantarum (strain ATCC BAA-793 / NCIMB 8826 / WCFS1) (Lactobacillus plantarum).